The chain runs to 502 residues: Ribose import ATP-binding protein RbsA (502 aa).

2 ABC transporter domains span residues 3–239 (VTMR…VGRE) and 249–493 (AAPG…TGGA). ATP is bound at residue 35-42 (GENGAGKS).

The protein belongs to the ABC transporter superfamily. Ribose importer (TC 3.A.1.2.1) family. The complex is composed of an ATP-binding protein (RbsA), two transmembrane proteins (RbsC) and a solute-binding protein (RbsB).

The protein localises to the cell inner membrane. It catalyses the reaction D-ribose(out) + ATP + H2O = D-ribose(in) + ADP + phosphate + H(+). Its function is as follows. Part of the ABC transporter complex RbsABC involved in ribose import. Responsible for energy coupling to the transport system. The chain is Ribose import ATP-binding protein RbsA from Chromobacterium violaceum (strain ATCC 12472 / DSM 30191 / JCM 1249 / CCUG 213 / NBRC 12614 / NCIMB 9131 / NCTC 9757 / MK).